We begin with the raw amino-acid sequence, 184 residues long: MGAVLSCCRNHSGEENEALLREQQAGYGSQGNANDEYDAEQMRLKEHEHEQKLLAREQELRDIVANTNDKLIDISMINNSGIVIQGTDLQEALDKRQQEEGGDSREDERSAGDDNLSGHSVPSSGSAQATTHQTAPRTNTFTLLTSPDSAKISKEQLKKLHSNILNEIFSQSQVNKPGPLTVPF.

Gly2 carries the N-myristoyl glycine lipid modification. 2 S-palmitoyl cysteine lipidation sites follow: Cys7 and Cys8. Residues 30–71 adopt a coiled-coil conformation; sequence QGNANDEYDAEQMRLKEHEHEQKLLAREQELRDIVANTNDKL. Positions 89–147 are disordered; it reads LQEALDKRQQEEGGDSREDERSAGDDNLSGHSVPSSGSAQATTHQTAPRTNTFTLLTSP. Basic and acidic residues predominate over residues 92–112; sequence ALDKRQQEEGGDSREDERSAG. Positions 117–147 are enriched in polar residues; sequence SGHSVPSSGSAQATTHQTAPRTNTFTLLTSP. Phosphoserine is present on residues Ser146 and Ser149.

As to quaternary structure, component of the GSE complex composed of GTR1, GTR2, SLM4, MEH1 and LTV1. Component of the EGO complex, at least composed of GTR2, SLM4 and MEH1.

The protein localises to the vacuole membrane. Its function is as follows. Component of the GSE complex, a GTPase complex required for intracellular sorting of GAP1 out of the endosome. Component of the EGO complex, a complex involved in the regulation of microautophagy. The chain is Protein MEH1 (MEH1) from Saccharomyces cerevisiae (strain ATCC 204508 / S288c) (Baker's yeast).